We begin with the raw amino-acid sequence, 404 residues long: Probable tRNA sulfurtransferase (404 aa).

In terms of domain architecture, THUMP spans 61-166 (EAVSERLKDV…SGYSYIMCDE (106 aa)). ATP contacts are provided by residues 184–185 (LL), 209–210 (HF), R266, G288, and Q297.

Belongs to the ThiI family.

Its subcellular location is the cytoplasm. The catalysed reaction is [ThiI sulfur-carrier protein]-S-sulfanyl-L-cysteine + a uridine in tRNA + 2 reduced [2Fe-2S]-[ferredoxin] + ATP + H(+) = [ThiI sulfur-carrier protein]-L-cysteine + a 4-thiouridine in tRNA + 2 oxidized [2Fe-2S]-[ferredoxin] + AMP + diphosphate. It catalyses the reaction [ThiS sulfur-carrier protein]-C-terminal Gly-Gly-AMP + S-sulfanyl-L-cysteinyl-[cysteine desulfurase] + AH2 = [ThiS sulfur-carrier protein]-C-terminal-Gly-aminoethanethioate + L-cysteinyl-[cysteine desulfurase] + A + AMP + 2 H(+). The protein operates within cofactor biosynthesis; thiamine diphosphate biosynthesis. Its function is as follows. Catalyzes the ATP-dependent transfer of a sulfur to tRNA to produce 4-thiouridine in position 8 of tRNAs, which functions as a near-UV photosensor. Also catalyzes the transfer of sulfur to the sulfur carrier protein ThiS, forming ThiS-thiocarboxylate. This is a step in the synthesis of thiazole, in the thiamine biosynthesis pathway. The sulfur is donated as persulfide by IscS. The protein is Probable tRNA sulfurtransferase of Bacillus cereus (strain ATCC 10987 / NRS 248).